Reading from the N-terminus, the 62-residue chain is Large ribosomal subunit protein uL29 (62 aa).

It belongs to the universal ribosomal protein uL29 family.

This is Large ribosomal subunit protein uL29 from Chromobacterium violaceum (strain ATCC 12472 / DSM 30191 / JCM 1249 / CCUG 213 / NBRC 12614 / NCIMB 9131 / NCTC 9757 / MK).